The chain runs to 921 residues: Isoleucine--tRNA ligase 1 (921 aa).

The short motif at Pro-57–His-67 is the 'HIGH' region element. Glu-552 provides a ligand contact to L-isoleucyl-5'-AMP. The short motif at Lys-593–Ser-597 is the 'KMSKS' region element. Residue Lys-596 coordinates ATP. 4 residues coordinate Zn(2+): Cys-888, Cys-891, Cys-908, and Cys-911.

Belongs to the class-I aminoacyl-tRNA synthetase family. IleS type 1 subfamily. In terms of assembly, monomer. Requires Zn(2+) as cofactor.

Its subcellular location is the cytoplasm. The catalysed reaction is tRNA(Ile) + L-isoleucine + ATP = L-isoleucyl-tRNA(Ile) + AMP + diphosphate. Catalyzes the attachment of isoleucine to tRNA(Ile). As IleRS can inadvertently accommodate and process structurally similar amino acids such as valine, to avoid such errors it has two additional distinct tRNA(Ile)-dependent editing activities. One activity is designated as 'pretransfer' editing and involves the hydrolysis of activated Val-AMP. The other activity is designated 'posttransfer' editing and involves deacylation of mischarged Val-tRNA(Ile). The sequence is that of Isoleucine--tRNA ligase 1 from Bacillus cereus (strain ATCC 10987 / NRS 248).